The chain runs to 393 residues: Messenger RNA-binding inhibitor of apoptosis 1 (393 aa).

The tract at residues 12-76 is KH 1-like; it reads ELYIPQKMKA…EKILRDVWRK (65 aa). The KH 2-like stretch occupies residues 79–157; sequence VQIMIREAAL…MMIECLTEHF (79 aa). The tract at residues 259-322 is KH 3-like; it reads EKIKQWIPTT…NKEQCQEARN (64 aa). The interval 328 to 393 is disordered; the sequence is MQSHQDKPAS…LTPRKLSPSD (66 aa). Over residues 345–359 the composition is skewed to low complexity; it reads STPGSPFTSDSSSTT.

In terms of assembly, may interact with wago-4. As to expression, expressed throughout the germline and in oocytes (at protein level).

It is found in the cytoplasm. Its subcellular location is the perinuclear region. RNA-binding protein which binds to its own mRNA and target mRNAs to negatively regulate gene expression to modulate apoptosis and differentiation in the germline. Negatively regulates the expression of the argonaute protein wago-4, and may thus play a role in RNA-mediated gene silencing (RNAi) in the germline. This Caenorhabditis elegans protein is Messenger RNA-binding inhibitor of apoptosis 1.